Reading from the N-terminus, the 154-residue chain is Probable archaeosortase D (154 aa).

The next 4 membrane-spanning stretches (helical) occupy residues 6–26, 57–77, 91–111, and 125–145; these read AIYI…LKML, IIEI…LGYI, YSVF…ILII, and VISF…IYLL. Cys64 serves as the catalytic Acyl-thioester intermediate. The active-site Proton donor is the Arg106.

The protein belongs to the exosortase/archaeosortase family. Archaeosortase D subfamily.

It is found in the cell membrane. Its function is as follows. Transpeptidase that recognizes and modifies its substrate by proteolytic cleavage of a sorting signal. Following cleavage, a covalent intermediate is formed via a thioester bond between the archaeosortase and its substrate, which is then transferred and covalently attached to the cell membrane. The sequence is that of Probable archaeosortase D from Methanocaldococcus jannaschii (strain ATCC 43067 / DSM 2661 / JAL-1 / JCM 10045 / NBRC 100440) (Methanococcus jannaschii).